Consider the following 401-residue polypeptide: Argininosuccinate synthase (401 aa).

ATP-binding positions include 10-18 (AYSGGVDTS) and Ala38. An L-citrulline-binding site is contributed by Tyr89. Position 119 (Gly119) interacts with ATP. L-aspartate-binding residues include Thr121, Asn125, and Asp126. An L-citrulline-binding site is contributed by Asn125. The L-citrulline site is built by Arg129, Ser177, Ser186, Glu262, and Tyr274.

The protein belongs to the argininosuccinate synthase family. Type 1 subfamily. As to quaternary structure, homotetramer.

The protein resides in the cytoplasm. It carries out the reaction L-citrulline + L-aspartate + ATP = 2-(N(omega)-L-arginino)succinate + AMP + diphosphate + H(+). Its pathway is amino-acid biosynthesis; L-arginine biosynthesis; L-arginine from L-ornithine and carbamoyl phosphate: step 2/3. This Synechococcus sp. (strain WH7803) protein is Argininosuccinate synthase.